Here is a 250-residue protein sequence, read N- to C-terminus: Methionine aminopeptidase (250 aa).

A substrate-binding site is contributed by His77. 3 residues coordinate a divalent metal cation: Asp95, Asp106, and His169. A substrate-binding site is contributed by His176. A divalent metal cation is bound by residues Glu202 and Glu233.

The protein belongs to the peptidase M24A family. Methionine aminopeptidase type 1 subfamily. Monomer. Requires Co(2+) as cofactor. Zn(2+) is required as a cofactor. Mn(2+) serves as cofactor. It depends on Fe(2+) as a cofactor.

The enzyme catalyses Release of N-terminal amino acids, preferentially methionine, from peptides and arylamides.. Its function is as follows. Removes the N-terminal methionine from nascent proteins. The N-terminal methionine is often cleaved when the second residue in the primary sequence is small and uncharged (Met-Ala-, Cys, Gly, Pro, Ser, Thr, or Val). Requires deformylation of the N(alpha)-formylated initiator methionine before it can be hydrolyzed. The chain is Methionine aminopeptidase from Clostridium acetobutylicum (strain ATCC 824 / DSM 792 / JCM 1419 / IAM 19013 / LMG 5710 / NBRC 13948 / NRRL B-527 / VKM B-1787 / 2291 / W).